Reading from the N-terminus, the 272-residue chain is Ribosomal RNA small subunit methyltransferase A (272 aa).

Residues N18, L20, G45, E66, D91, and N113 each coordinate S-adenosyl-L-methionine.

Belongs to the class I-like SAM-binding methyltransferase superfamily. rRNA adenine N(6)-methyltransferase family. RsmA subfamily.

The protein resides in the cytoplasm. The enzyme catalyses adenosine(1518)/adenosine(1519) in 16S rRNA + 4 S-adenosyl-L-methionine = N(6)-dimethyladenosine(1518)/N(6)-dimethyladenosine(1519) in 16S rRNA + 4 S-adenosyl-L-homocysteine + 4 H(+). Its function is as follows. Specifically dimethylates two adjacent adenosines (A1518 and A1519) in the loop of a conserved hairpin near the 3'-end of 16S rRNA in the 30S particle. May play a critical role in biogenesis of 30S subunits. The chain is Ribosomal RNA small subunit methyltransferase A from Photorhabdus laumondii subsp. laumondii (strain DSM 15139 / CIP 105565 / TT01) (Photorhabdus luminescens subsp. laumondii).